Consider the following 330-residue polypeptide: Aspartate--ammonia ligase (330 aa).

The protein belongs to the class-II aminoacyl-tRNA synthetase family. AsnA subfamily.

It is found in the cytoplasm. It catalyses the reaction L-aspartate + NH4(+) + ATP = L-asparagine + AMP + diphosphate + H(+). It functions in the pathway amino-acid biosynthesis; L-asparagine biosynthesis; L-asparagine from L-aspartate (ammonia route): step 1/1. The polypeptide is Aspartate--ammonia ligase (Shigella dysenteriae serotype 1 (strain Sd197)).